A 1450-amino-acid chain; its full sequence is Phospholipase B1, membrane-associated (1450 aa).

Residues 1–27 (MESWPGVSLVGLLLLLLLGQGPSQIHG) form the signal peptide. The Extracellular segment spans residues 28–1422 (SSGENTSQPQ…KAKENSNTLY (1395 aa)). Residues asparagine 32, asparagine 45, and asparagine 179 are each glycosylated (N-linked (GlcNAc...) asparagine). Repeat copies occupy residues 41–351 (RTLK…YRNS), 366–711 (MKEG…TKNS), and 712–1058 (NLGH…FRNS). The 4 X 308-326 AA approximate repeats stretch occupies residues 41–1407 (RTLKNFSFPC…NPFLYTVRNS (1367 aa)). Active-site residues include serine 404, aspartate 518, and histidine 659. N-linked (GlcNAc...) asparagine glycosylation occurs at asparagine 699. Over residues 708–720 (TKNSNLGHGTSMS) the composition is skewed to polar residues. The disordered stretch occupies residues 708-734 (TKNSNLGHGTSMSCEEKAPSASPPTSV). N-linked (GlcNAc...) asparagine glycosylation is found at asparagine 787, asparagine 801, asparagine 844, asparagine 880, asparagine 926, asparagine 1059, asparagine 1226, asparagine 1280, asparagine 1383, and asparagine 1387. Residues 1068-1407 (IENWGSDFLC…NPFLYTVRNS (340 aa)) form repeat 4. Residues 1408–1450 (QILLDKAKENSNTLYWAVPVAAVGGLVVGILGMMLWRTVRLVQ) are necessary for membrane localization. Residues 1423–1443 (WAVPVAAVGGLVVGILGMMLW) traverse the membrane as a helical segment. The Cytoplasmic portion of the chain corresponds to 1444–1450 (RTVRLVQ).

The protein belongs to the 'GDSL' lipolytic enzyme family. Phospholipase B1 subfamily. Undergoes proteolytic cleavage in the ileum. As to expression, expressed in the ileum mucosa, Paneth cells spermatocytes, spermatids and sperm (at protein level). Expressed in the ileum, jejunum, esophagus and testis.

The protein localises to the apical cell membrane. The enzyme catalyses a 1,2-diacyl-sn-glycero-3-phosphocholine + H2O = a 1-acyl-sn-glycero-3-phosphocholine + a fatty acid + H(+). The catalysed reaction is a 1-O-alkyl-2-acyl-sn-glycero-3-phosphocholine + H2O = a 1-O-alkyl-sn-glycero-3-phosphocholine + a fatty acid + H(+). It catalyses the reaction a 1-acyl-sn-glycero-3-phosphocholine + H2O = sn-glycerol 3-phosphocholine + a fatty acid + H(+). It carries out the reaction a triacylglycerol + H2O = a diacylglycerol + a fatty acid + H(+). The enzyme catalyses 1,2-dihexadecanoyl-sn-glycero-3-phosphocholine + H2O = 1-hexadecanoyl-sn-glycero-3-phosphocholine + hexadecanoate + H(+). The catalysed reaction is 1-hexadecanoyl-2-(9Z-octadecenoyl)-sn-glycero-3-phosphocholine + H2O = 1-hexadecanoyl-sn-glycero-3-phosphocholine + (9Z)-octadecenoate + H(+). It catalyses the reaction 1,2-di-(9Z-octadecenoyl)-sn-glycero-3-phosphocholine + H2O = 1-(9Z-octadecenoyl)-sn-glycero-3-phosphocholine + (9Z)-octadecenoate + H(+). It carries out the reaction 1-hexadecanoyl-2-(9Z,12Z-octadecadienoyl)-sn-glycero-3-phosphocholine + H2O = (9Z,12Z)-octadecadienoate + 1-hexadecanoyl-sn-glycero-3-phosphocholine + H(+). The enzyme catalyses 1-hexadecanoyl-2-(9Z,12Z-octadecadienoyl)-sn-glycero-3-phosphocholine + H2O = 2-(9Z,12Z-octadecadienoyl)-sn-glycero-3-phosphocholine + hexadecanoate + H(+). The catalysed reaction is 1-hexadecanoyl-2-(9Z-octadecenoyl)-sn-glycero-3-phosphoethanolamine + H2O = 1-hexadecanoyl-sn-glycero-3-phosphoethanolamine + (9Z)-octadecenoate + H(+). It catalyses the reaction 1-hexadecanoyl-2-(9Z-octadecenoyl)-sn-glycero-3-phospho-(1'-sn-glycerol) + H2O = 1-hexadecanoyl-sn-glycero-3-phospho-(1'-sn-glycerol) + (9Z)-octadecenoate + H(+). It carries out the reaction 1,2-dihexadecanoyl-sn-glycero-3-phosphocholine + 2 H2O = sn-glycerol 3-phosphocholine + 2 hexadecanoate + 2 H(+). The enzyme catalyses 1-O-hexadecyl-2-(9Z)-octadecenoyl-sn-glycero-3-phosphocholine + H2O = 1-O-hexadecyl-sn-glycero-3-phosphocholine + (9Z)-octadecenoate + H(+). The catalysed reaction is 1-hexadecanoyl-sn-glycero-3-phosphocholine + H2O = sn-glycerol 3-phosphocholine + hexadecanoate + H(+). It catalyses the reaction 1,2,3-tri-(9Z-octadecenoyl)-glycerol + H2O = di-(9Z)-octadecenoylglycerol + (9Z)-octadecenoate + H(+). It carries out the reaction 1-hexadecanoyl-2-(9Z)-octadecenoyl-3-octadecanoyl-sn-glycerol + H2O = 1-hexadecanoyl-2-(9Z-octadecenoyl)-sn-glycerol + octadecanoate + H(+). The enzyme catalyses 1,3-dihexadecanoyl-2-(9Z-octadecenoyl)glycerol + H2O = 1,3-dihexadecanoylglycerol + (9Z)-octadecenoate + H(+). The catalysed reaction is 1,3-dihexadecanoyl-2-(9Z-octadecenoyl)glycerol + H2O = 1-hexadecanoyl-2-(9Z-octadecenoyl)-glycerol + hexadecanoate + H(+). It catalyses the reaction 1-hexadecanoyl-2-(9Z)-octadecenoyl-3-octadecanoyl-sn-glycerol + H2O = 1-hexadecanoyl-3-octadecanoyl-sn-glycerol + (9Z)-octadecenoate + H(+). It carries out the reaction 1-hexadecanoyl-2-(9Z)-octadecenoyl-3-octadecanoyl-sn-glycerol + H2O = 2-(9Z-octadecenoyl)-3-octadecanoyl-sn-glycerol + hexadecanoate + H(+). The enzyme catalyses 1-octadecanoyl-2-(9Z,12Z)-octadecadienoyl-sn-glycerol + H2O = 1-octadecanoyl-sn-glycerol + (9Z,12Z)-octadecadienoate + H(+). The catalysed reaction is 1,2-di-(9Z-octadecenoyl)-sn-glycerol + H2O = 1-(9Z-octadecenoyl)-sn-glycerol + (9Z)-octadecenoate + H(+). It catalyses the reaction 2,3-di-(9Z)-octadecenoyl-sn-glycerol + H2O = 3-(9Z-octadecenoyl)-sn-glycerol + (9Z)-octadecenoate + H(+). It carries out the reaction 1,3-di-(9Z-octadecenoyl)-glycerol + H2O = 1-(9Z-octadecenoyl)-glycerol + (9Z)-octadecenoate + H(+). The enzyme catalyses 1-(9Z-octadecenoyl)-glycerol + H2O = glycerol + (9Z)-octadecenoate + H(+). The catalysed reaction is 2-(9Z-octadecenoyl)-glycerol + H2O = glycerol + (9Z)-octadecenoate + H(+). With respect to regulation, up-regulated by bile acids such as deoxycholate. Inhibited by diisopropyl fluorophosphate. Calcium-independent membrane-associated phospholipase that catalyzes complete diacylation of phospholipids by hydrolyzing both sn-1 and sn-2 fatty acyl chains attached to the glycerol backbone (phospholipase B activity). Has dual phospholipase and lysophospholipase activities toward diacylphospholipids. Preferentially cleaves sn-2 ester bonds over sn-1 bonds. Acts as a lipase toward glycerolipid substrates. Hydrolyzes fatty acyl chains of diacylglycerols with preference for the sn-2 position and of triacylglycerols with not positional selectivity. May also hydrolyze long chain retinyl esters such as retinyl palmitate. May contribute to digestion of dietary phospholipids, glycerolipids and retinoids, facilitating lipid absorption at the brush border. This Rattus norvegicus (Rat) protein is Phospholipase B1, membrane-associated (Plb1).